Here is a 208-residue protein sequence, read N- to C-terminus: CASP-like protein 4A4 (208 aa).

Residues 1 to 53 lie on the Cytoplasmic side of the membrane; sequence MKELKDHVVVITYGPSSEASVTASPVSQQTPSLFAYSVTPSASRFSSRRASVH. The helical transmembrane segment at 54 to 74 threads the bilayer; sequence VIGLVLRFITMVLCFVSALSL. The Extracellular segment spans residues 75 to 92; that stretch reads AVNVQRPSKRHLTQNSSS. An N-linked (GlcNAc...) asparagine glycan is attached at Asn89. The helical transmembrane segment at 93–113 threads the bilayer; it reads FASYPELLYCFGVAVIGFVYT. The Cytoplasmic segment spans residues 114–141; sequence SLQTFKGVCDITHRGVLISEPLSDYISF. Residues 142 to 162 form a helical membrane-spanning segment; that stretch reads IFDQVICYLLVSSSSVAIAWI. Residues 163 to 176 are Extracellular-facing; the sequence is QHINEDAIKTLRNN. N-linked (GlcNAc...) asparagine glycosylation occurs at Asn175. The chain crosses the membrane as a helical span at residues 177–197; sequence SIVSVSMSFSAFLVLTLSGLL. Topologically, residues 198–208 are cytoplasmic; it reads SGYKLCKRFMW.

This sequence belongs to the Casparian strip membrane proteins (CASP) family. In terms of assembly, homodimer and heterodimers.

The protein resides in the cell membrane. The sequence is that of CASP-like protein 4A4 from Arabidopsis thaliana (Mouse-ear cress).